A 241-amino-acid chain; its full sequence is Deoxyribose-phosphate aldolase (241 aa).

Residue D95 is the Proton donor/acceptor of the active site. The active-site Schiff-base intermediate with acetaldehyde is the K159. The active-site Proton donor/acceptor is K188.

This sequence belongs to the DeoC/FbaB aldolase family. DeoC type 1 subfamily.

The protein resides in the cytoplasm. The catalysed reaction is 2-deoxy-D-ribose 5-phosphate = D-glyceraldehyde 3-phosphate + acetaldehyde. It participates in carbohydrate degradation; 2-deoxy-D-ribose 1-phosphate degradation; D-glyceraldehyde 3-phosphate and acetaldehyde from 2-deoxy-alpha-D-ribose 1-phosphate: step 2/2. Its function is as follows. Catalyzes a reversible aldol reaction between acetaldehyde and D-glyceraldehyde 3-phosphate to generate 2-deoxy-D-ribose 5-phosphate. The polypeptide is Deoxyribose-phosphate aldolase (Rhodopirellula baltica (strain DSM 10527 / NCIMB 13988 / SH1)).